The primary structure comprises 205 residues: uncharacterized protein (205 aa).

This is an uncharacterized protein from Picosynechococcus sp. (strain ATCC 27264 / PCC 7002 / PR-6) (Agmenellum quadruplicatum).